Reading from the N-terminus, the 294-residue chain is 2-oxo-3-(phosphooxy)propyl 3-oxoalkanoate synthase (294 aa).

This sequence belongs to the AfsA family.

The catalysed reaction is a medium-chain 3-oxoacyl-[ACP] + dihydroxyacetone phosphate = a (4-alkanoyl-5-oxo-2,5-dihydrofuran-3-yl)methyl phosphate + holo-[ACP] + H2O. Functionally, involved in the biosynthesis of virginiae butanolide (VB), a gamma-butyrolactone autoregulator that triggers the production of the streptogramin antibiotic virginiamycin. The sequence is that of 2-oxo-3-(phosphooxy)propyl 3-oxoalkanoate synthase from Streptomyces virginiae (Streptomyces cinnamonensis).